Consider the following 905-residue polypeptide: Toll-like receptor 3 (905 aa).

Positions 1–25 are cleaved as a signal peptide; the sequence is MKGCSSYLMYSFGGLLSLWILLVSS. The LRRNT domain maps to 26 to 52; sequence TNQCTVRYNVADCSHLKLTHIPDDLPS. The Lumenal segment spans residues 26-705; the sequence is TNQCTVRYNV…SCKDSAPFEL (680 aa). An intrachain disulfide couples Cys29 to Cys38. 3 N-linked (GlcNAc...) asparagine glycosylation sites follow: Asn53, Asn58, and Asn71. LRR repeat units lie at residues 53-74, 77-98, 101-122, 125-146, 149-170, and 173-196; these read NITV…NFTR, QLAI…LCQI, LLKV…TFVF, NLTE…PFKN, NLIK…TGVQ, and NLQE…EFLG. A disulfide bridge connects residues Cys96 and Cys123. The N-linked (GlcNAc...) asparagine glycan is linked to Asn125. N-linked (GlcNAc...) asparagine glycosylation is present at Asn197. One copy of the LRR 7 repeat lies at 199-220; that stretch reads SLRKLDLSSNPLKEFSPGCFQT. N-linked (GlcNAc...) asparagine glycosylation is found at Asn248, Asn253, Asn276, and Asn292. LRR repeat units follow at residues 250–271, 276–297, 300–321, 324–345, 357–378, 381–401, 409–430, 433–454, 458–479, 482–502, 508–529, 532–553, 564–585, 588–609, and 612–633; these read SIQN…TFSG, NLTQ…SFSY, SLRY…SFYG, NLRY…ASHP, YLEY…TFTG, SLKY…TNET, PLLT…TFSW, QLRI…QEWR, NIFE…SFAL, SLQR…SPSP, NLTI…LLEG, NLEI…ANPG, HLHI…VFKN, ELKS…IFDD, and SLRS…VFGP. N-linked (GlcNAc...) asparagine glycosylation is found at Asn399, Asn414, and Asn425. An N-linked (GlcNAc...) asparagine glycan is attached at Asn508. The 54-residue stretch at 646–699 folds into the LRRCT domain; that stretch reads NPFDCTCESISWFVNWINQTHTNISELSTHYLCNTPHHYYGFPLKLFDTSSCKD. Intrachain disulfides connect Cys650-Cys678 and Cys652-Cys697. Asn663 and Asn668 each carry an N-linked (GlcNAc...) asparagine glycan. A helical membrane pass occupies residues 706-726; sequence LFIISTSMLLVFILVVLLIHI. Over 727 to 905 the chain is Cytoplasmic; sequence EGWRISFYWN…VALGSRNSAH (179 aa). The region spanning 755 to 898 is the TIR domain; sequence FEYTAYIIHA…AFHHKLQVAL (144 aa). Tyr760 is subject to Phosphotyrosine. Residues Lys766, Lys813, and Lys832 each participate in a glycyl lysine isopeptide (Lys-Gly) (interchain with G-Cter in ubiquitin) cross-link. Tyr859 bears the Phosphotyrosine mark.

This sequence belongs to the Toll-like receptor family. As to quaternary structure, monomer and homodimer; dimerization is triggered by ligand-binding, the signaling unit is composed of one ds-RNA of around 40 bp and two TLR3 molecules, and lateral clustering of signaling units along the length of the ds-RNA ligand is required for TLR3 signal transduction. Interacts (via transmembrane domain) with UNC93B1; the interaction is required for transport from the ER to the endosomes. Interacts with SRC; upon binding of double-stranded RNA. Interacts with TICAM1 (via the TIR domain) in response to poly(I:C) and this interaction is enhanced in the presence of WDFY1. The tyrosine-phosphorylated form (via TIR domain) interacts with WDFY1 (via WD repeat 2) in response to poly(I:C). Ubiquitinated by RNF170 at Lys-766 via 'Lys-48'-linked ubiquitin chains; leading to TLR3 proteasomal degradation. Post-translationally, TLR3 signaling requires a proteolytic cleavage mediated by cathepsins CTSB and CTSH, the cleavage occurs between amino acids 252 and 346. The cleaved form of TLR3 is the predominant form found in endosomes. Ubiquitinated by TRIM3; leading to recognition and sorting of polyubiquitinated TLR3 by the ESCRT complexes. Ubiquitinated by ZNRF1 via 'Lys-63'-linked ubiquitin chains; leading to TLR3 lysosomal trafficking and degradation. Highly expressed in lung. After intraperitoneal injection of lipopolysaccharide, highly expressed in brain, heart, kidney, liver, lung and spleen.

It localises to the endoplasmic reticulum membrane. Its subcellular location is the endosome membrane. The protein localises to the early endosome. Functionally, key component of innate and adaptive immunity. TLRs (Toll-like receptors) control host immune response against pathogens through recognition of molecular patterns specific to microorganisms. TLR3 is a nucleotide-sensing TLR which is activated by double-stranded RNA, a sign of viral infection. Acts via the adapter TRIF/TICAM1, leading to NF-kappa-B activation, IRF3 nuclear translocation, cytokine secretion and the inflammatory response. This Mus musculus (Mouse) protein is Toll-like receptor 3.